Here is a 260-residue protein sequence, read N- to C-terminus: Proteasome subunit alpha type-1 (260 aa).

The disordered stretch occupies residues 231–260 (FLEGLEERPQRKPALPADEPAEKAEEPMEH). Over residues 250–260 (PAEKAEEPMEH) the composition is skewed to basic and acidic residues.

It belongs to the peptidase T1A family. The 26S proteasome consists of a 20S proteasome core and two 19S regulatory subunits. The 20S proteasome core is a barrel-shaped complex made of 28 subunits that are arranged in four stacked rings. The two outer rings are each formed by seven alpha subunits, and the two inner rings are formed by seven beta subunits. The proteolytic activity is exerted by three beta-subunits PSMB5, PSMB6 and PSMB7.

The protein localises to the cytoplasm. The protein resides in the nucleus. Functionally, component of the 20S core proteasome complex involved in the proteolytic degradation of most intracellular proteins. This complex plays numerous essential roles within the cell by associating with different regulatory particles. Associated with two 19S regulatory particles, forms the 26S proteasome and thus participates in the ATP-dependent degradation of ubiquitinated proteins. The 26S proteasome plays a key role in the maintenance of protein homeostasis by removing misfolded or damaged proteins that could impair cellular functions, and by removing proteins whose functions are no longer required. Associated with the PA200 or PA28, the 20S proteasome mediates ubiquitin-independent protein degradation. This type of proteolysis is required in several pathways including spermatogenesis (20S-PA200 complex) or generation of a subset of MHC class I-presented antigenic peptides (20S-PA28 complex). This chain is Proteasome subunit alpha type-1 (PSMA1), found in Gallus gallus (Chicken).